Here is a 218-residue protein sequence, read N- to C-terminus: Ribose-5-phosphate isomerase A (218 aa).

Substrate contacts are provided by residues 28-31 (TGST), 81-84 (DGAD), and 94-97 (KGGG). Glu-103 acts as the Proton acceptor in catalysis. Lys-121 serves as a coordination point for substrate.

It belongs to the ribose 5-phosphate isomerase family. Homodimer.

The catalysed reaction is aldehydo-D-ribose 5-phosphate = D-ribulose 5-phosphate. Its pathway is carbohydrate degradation; pentose phosphate pathway; D-ribose 5-phosphate from D-ribulose 5-phosphate (non-oxidative stage): step 1/1. Catalyzes the reversible conversion of ribose-5-phosphate to ribulose 5-phosphate. In Vibrio campbellii (strain ATCC BAA-1116), this protein is Ribose-5-phosphate isomerase A.